A 79-amino-acid polypeptide reads, in one-letter code: Acyl carrier protein (79 aa).

The Carrier domain occupies 2 to 77 (SDVAERVKKI…DAIDFIKANA (76 aa)). At Ser-37 the chain carries O-(pantetheine 4'-phosphoryl)serine.

It belongs to the acyl carrier protein (ACP) family. In terms of processing, 4'-phosphopantetheine is transferred from CoA to a specific serine of apo-ACP by AcpS. This modification is essential for activity because fatty acids are bound in thioester linkage to the sulfhydryl of the prosthetic group.

Its subcellular location is the cytoplasm. Its pathway is lipid metabolism; fatty acid biosynthesis. In terms of biological role, carrier of the growing fatty acid chain in fatty acid biosynthesis. The polypeptide is Acyl carrier protein (Azospirillum brasilense).